Reading from the N-terminus, the 137-residue chain is MPNFAGTWKMKSSENFDELLKALGVNTMLRKVAVAAASNPHVEIRQDGEKFYIKTSTTVRTTEINFHIGEEFDEETVDGRKCKSLPTWESENKIRCKQTLVEGDGPKTFWTRELNGDELTLVFGADDVVCTRIYVRE.

The short motif at 21–31 (KALGVNTMLRK) is the Nuclear localization signal element. 132-134 (RIY) serves as a coordination point for all-trans-retinoate.

This sequence belongs to the calycin superfamily. Fatty-acid binding protein (FABP) family.

Its subcellular location is the cytoplasm. Its function is as follows. Cytosolic CRABPs may regulate the access of retinoic acid to the nuclear retinoic acid receptors. This chain is Cellular retinoic acid-binding protein 1 (crabp1), found in Takifugu rubripes (Japanese pufferfish).